Reading from the N-terminus, the 171-residue chain is Ribosome-binding factor A (171 aa).

Residues 120–132 (AALAAAAQPAGDP) show a composition bias toward low complexity. Residues 120 to 171 (AALAAAAQPAGDPDPYKKPVDHTDDWDEDDEDDRDGDDAVDALDAAADVPRL) are disordered. Over residues 133–142 (DPYKKPVDHT) the composition is skewed to basic and acidic residues. The span at 143 to 160 (DDWDEDDEDDRDGDDAVD) shows a compositional bias: acidic residues. Over residues 161-171 (ALDAAADVPRL) the composition is skewed to low complexity.

It belongs to the RbfA family. As to quaternary structure, monomer. Binds 30S ribosomal subunits, but not 50S ribosomal subunits or 70S ribosomes.

Its subcellular location is the cytoplasm. Functionally, one of several proteins that assist in the late maturation steps of the functional core of the 30S ribosomal subunit. Associates with free 30S ribosomal subunits (but not with 30S subunits that are part of 70S ribosomes or polysomes). Required for efficient processing of 16S rRNA. May interact with the 5'-terminal helix region of 16S rRNA. The sequence is that of Ribosome-binding factor A from Kineococcus radiotolerans (strain ATCC BAA-149 / DSM 14245 / SRS30216).